The primary structure comprises 487 residues: Serine/threonine-protein kinase 4 (487 aa).

At Met-1 the chain carries N-acetylmethionine. Thr-3 is modified (phosphothreonine). The Protein kinase domain maps to 30–281 (FDVLEKLGEG…ATQLLQHPFV (252 aa)). ATP is bound by residues 36 to 44 (LGEGSYGSV) and Lys-59. Residue Asp-149 is the Proton acceptor of the active site. The residue at position 183 (Thr-183) is a Phosphothreonine; by autocatalysis. A Phosphoserine modification is found at Ser-265. Residues 290 to 310 (LRDLINEAMDVKLKRQESQQR) are a coiled coil. The segment covering 303–312 (KRQESQQREV) has biased composition (basic and acidic residues). Positions 303 to 332 (KRQESQQREVDQDDEENSEEDEMDSGTMVR) are disordered. A compositionally biased stretch (acidic residues) spans 313–326 (DQDDEENSEEDEMD). Phosphoserine is present on Ser-320. Residues Thr-340 and Thr-367 each carry the phosphothreonine modification. Phosphothreonine; by PKB/AKT1 is present on Thr-387. Phosphoserine occurs at positions 410 and 414. Residue Tyr-433 is modified to Phosphotyrosine. In terms of domain architecture, SARAH spans 433–480 (YEFLKSWTVEDLQKRLLALDPMMEQEIEEIRQKYQSKRQPILDAIEAK).

This sequence belongs to the protein kinase superfamily. STE Ser/Thr protein kinase family. STE20 subfamily. Homodimer; mediated via the coiled-coil region. Interacts with NORE1, which inhibits autoactivation. Interacts with and stabilizes SAV1. Interacts with RASSF1. Interacts with FOXO3. Interacts with RASSF2 (via SARAH domain). Interacts with AR, PKB/AKT1, TNNI3 and SIRT1. Interacts with DLG5 (via PDZ domain 3). Interacts with MARK3 and SCRIB in the presence of DLG5. Mg(2+) serves as cofactor. Post-translationally, autophosphorylated on serine and threonine residues. Phosphorylation at Thr-387 by PKB/AKT1, leads to inhibition of its: kinase activity, nuclear translocation and autophosphorylation at Thr-183. It also diminishes its cleavage by caspases and its ability to phosphorylate FOXO3. In terms of processing, proteolytically cleaved by caspase-3 during apoptosis at Asp-326 and Asp-349 resulting in a 37 kDa or a 39 kDa subunit respectively. The 39 kDa subunit is further cleaved into the 37 kDa form. Proteolytic cleavage results in kinase activation and nuclear translocation of the truncated form (MST1/N). It is less likely that cleavage at Asp-349 is a prerequisite for activation as this site is not conserved in the murine ortholog.

It localises to the cytoplasm. It is found in the nucleus. It catalyses the reaction L-seryl-[protein] + ATP = O-phospho-L-seryl-[protein] + ADP + H(+). The catalysed reaction is L-threonyl-[protein] + ATP = O-phospho-L-threonyl-[protein] + ADP + H(+). With respect to regulation, inhibited by the C-terminal non-catalytic region. Activated by caspase-cleavage. Full activation also requires homodimerization and autophosphorylation of Thr-183. Activated by RASSF1 which acts by preventing its dephosphorylation. Its function is as follows. Stress-activated, pro-apoptotic kinase which, following caspase-cleavage, enters the nucleus and induces chromatin condensation followed by internucleosomal DNA fragmentation. Key component of the Hippo signaling pathway which plays a pivotal role in organ size control and tumor suppression by restricting proliferation and promoting apoptosis. The core of this pathway is composed of a kinase cascade wherein STK3/MST2 and STK4/MST1, in complex with its regulatory protein SAV1, phosphorylates and activates LATS1/2 in complex with its regulatory protein MOB1, which in turn phosphorylates and inactivates YAP1 oncoprotein and WWTR1/TAZ. Phosphorylation of YAP1 by LATS2 inhibits its translocation into the nucleus to regulate cellular genes important for cell proliferation, cell death, and cell migration. STK3/MST2 and STK4/MST1 are required to repress proliferation of mature hepatocytes, to prevent activation of facultative adult liver stem cells (oval cells), and to inhibit tumor formation. Phosphorylates 'Ser-14' of histone H2B (H2BS14ph) during apoptosis. Phosphorylates FOXO3 upon oxidative stress, which results in its nuclear translocation and cell death initiation. Phosphorylates MOBKL1A, MOBKL1B and RASSF2. Phosphorylates TNNI3 (cardiac Tn-I) and alters its binding affinity to TNNC1 (cardiac Tn-C) and TNNT2 (cardiac Tn-T). Phosphorylates FOXO1 on 'Ser-212' and regulates its activation and stimulates transcription of PMAIP1 in a FOXO1-dependent manner. Phosphorylates SIRT1 and inhibits SIRT1-mediated p53/TP53 deacetylation, thereby promoting p53/TP53 dependent transcription and apoptosis upon DNA damage. Acts as an inhibitor of PKB/AKT1. Phosphorylates AR on 'Ser-650' and suppresses its activity by intersecting with PKB/AKT1 signaling and antagonizing formation of AR-chromatin complexes. The chain is Serine/threonine-protein kinase 4 (STK4) from Chlorocebus aethiops (Green monkey).